Reading from the N-terminus, the 225-residue chain is Type II restriction enzyme BslI subunit alpha (225 aa).

2 C4-type zinc fingers span residues 36–53 (CKDC…CYFC) and 63–84 (CNSC…TDGC).

Heterotetramer of two alpha and two beta subunits. The alpha subunit is believed to be responsible for DNA recognition, while the beta subunit is thought to mediate cleavage. Zn(2+) is required as a cofactor.

It carries out the reaction Endonucleolytic cleavage of DNA to give specific double-stranded fragments with terminal 5'-phosphates.. Its function is as follows. A P subtype restriction enzyme that recognizes the double-stranded sequence 5'-CCN(7)GG-3' and cleaves after N-7. The chain is Type II restriction enzyme BslI subunit alpha from Bacillus sp. (strain NEB-606).